The sequence spans 281 residues: Nucleotide-binding protein Patl_0571 (281 aa).

Position 8-15 (8-15 (GRSGSGKS)) interacts with ATP. 56 to 59 (DVRN) is a GTP binding site.

Belongs to the RapZ-like family.

Its function is as follows. Displays ATPase and GTPase activities. In Pseudoalteromonas atlantica (strain T6c / ATCC BAA-1087), this protein is Nucleotide-binding protein Patl_0571.